The primary structure comprises 270 residues: Flavin-dependent thymidylate synthase (270 aa).

The ThyX domain occupies 13–218 (GFVRLVDQMG…PLAWAAFEEH (206 aa)). Residues Ser-59, 82–84 (RHR), and Glu-90 each bind FAD. Residues 79 to 82 (QWFR), 90 to 94 (EISGR), and Arg-157 contribute to the dUMP site. A ThyX motif motif is present at residues 82–92 (RHRTASVNEIS). FAD is bound by residues 173-175 (DLH) and His-179. DUMP is bound at residue Arg-184. The Involved in ionization of N3 of dUMP, leading to its activation role is filled by Arg-184.

The protein belongs to the thymidylate synthase ThyX family. Homotetramer. The cofactor is FAD.

The catalysed reaction is dUMP + (6R)-5,10-methylene-5,6,7,8-tetrahydrofolate + NADPH + H(+) = dTMP + (6S)-5,6,7,8-tetrahydrofolate + NADP(+). It functions in the pathway pyrimidine metabolism; dTTP biosynthesis. Catalyzes the reductive methylation of 2'-deoxyuridine-5'-monophosphate (dUMP) to 2'-deoxythymidine-5'-monophosphate (dTMP) while utilizing 5,10-methylenetetrahydrofolate (mTHF) as the methyl donor, and NADPH and FADH(2) as the reductant. The protein is Flavin-dependent thymidylate synthase of Thermus thermophilus (strain ATCC 27634 / DSM 579 / HB8).